We begin with the raw amino-acid sequence, 295 residues long: Trimeric intracellular cation channel type A (295 aa).

At 1-11 the chain is on the lumenal side; it reads MELLSALSLDD. A helical membrane pass occupies residues 12–32; the sequence is LAVAFSKLPVFPLFDVAYYII. Residues 33-51 are Cytoplasmic-facing; it reads SILYLKYEPGAVDLSKRSP. A helical transmembrane segment spans residues 52–72; the sequence is VASWLCAMLYCFGSYILADVL. Residues 73 to 84 are Lumenal-facing; that stretch reads LGESPIHYFSNN. Gly-74 is a Ca(2+) binding site. A helical transmembrane segment spans residues 85-105; sequence ANILLASAVWYLTFFCPLNIF. Topologically, residues 106-144 are cytoplasmic; it reads YKIVSFLPLKLVLVGMKEVVRVRKIAMGIHHAHHHYHHG. 2 residues coordinate a 1,2-diacyl-sn-glycero-3-phospho-(1D-myo-inositol-4,5-bisphosphate): Lys-122 and Arg-126. The helical transmembrane segment at 145 to 165 threads the bilayer; sequence WVIMVLIGWVKGSGVALMSNL. The Lumenal segment spans residues 166 to 178; it reads EQLLRGVWKPETN. The chain crosses the membrane as a helical span at residues 179–199; sequence EILHMSFPTKASLYGAILFTL. Topologically, residues 200–201 are cytoplasmic; it reads QQ. A helical membrane pass occupies residues 202–222; sequence AHWLPISKAYLIFFFTLFMAI. The Lumenal segment spans residues 223-233; the sequence is CKIYMTATHSH. A helical membrane pass occupies residues 234 to 254; the sequence is GSPFAIFESGICCVLFGAANG. Over 255–295 the chain is Cytoplasmic; it reads DHDDHGDHHHHHDDHDVSHSTVKSKEELNEGTRKRKTKKAE. Over residues 259-286 the composition is skewed to basic and acidic residues; that stretch reads HGDHHHHHDDHDVSHSTVKSKEELNEGT. Positions 259–295 are disordered; that stretch reads HGDHHHHHDDHDVSHSTVKSKEELNEGTRKRKTKKAE.

Belongs to the TMEM38 family. In terms of assembly, homotrimer; conformation seems to be controled by binding to diacylglycerol (DAG).

It is found in the sarcoplasmic reticulum membrane. The protein localises to the nucleus membrane. It carries out the reaction K(+)(in) = K(+)(out). Its activity is regulated as follows. Channel activity is activated by a change of voltage within the sarcoplasmic reticulum lumen and blocked by luminal high Ca(2+) levels. Functionally, intracellular monovalent cation channel required for maintenance of rapid intracellular calcium release. Acts as a potassium counter-ion channel that functions in synchronization with calcium release from intracellular stores. Opened by a change of voltage within the sarcoplasmic reticulum lumen. The sequence is that of Trimeric intracellular cation channel type A (tmem38a) from Xenopus tropicalis (Western clawed frog).